Here is a 510-residue protein sequence, read N- to C-terminus: MFIENFKVESPNVKYTESEIHSVYDYQTTELVHEEKNGTYQWTVKPKTVKYEFKTDVHVPKLGVMLVGWGGNNGSTLTGGVIANREGISWATKDKVQQANYFGSLTQASTIRVGSFNGEEIYAPFKSLLPMVNPDDVVFGGWDISGMNLADAMARAKVFDIDLQKQLRPYMESMVPLPGIYDPDFIAANQGSRANNVIKGTKKEQIDQIIKDIREFKEKNKVDKVVVLWTANTERYSNVVVGLNDTMENLFASVDRNEAEISPSTLYAIACILENVPFINGSPQNTFVPGLIDLAIKRNTLIGGDDFKSGQTKMKSVLVDFLVGAGIKPTSIVSYNHLGNNDGMNLSAPQTFRSKEISKSNVVDDMVSSNAILYEPGEHPDHVVVIKYVPYVGDSKRAMDEYTSEIFMGGKNTIVLHNTCEDSLLAAPIILDLVLLAELSTRIQLKAEGEGKFHSFHPVATILSYLTKAPLVPPGTPVVNALSKQRAMLENILRACVGLAPENNMILEYK.

Positions 70, 71, 72, 73, 143, 180, 190, 193, 230, 231, 232, 233, 281, 282, 306, 309, 340, 341, 342, 355, 393, 394, 422, and 423 each coordinate NAD(+).

This sequence belongs to the myo-inositol 1-phosphate synthase family. It depends on NAD(+) as a cofactor.

Its subcellular location is the cytoplasm. The protein localises to the cytosol. It is found in the nucleus. It carries out the reaction D-glucose 6-phosphate = 1D-myo-inositol 3-phosphate. Its pathway is polyol metabolism; myo-inositol biosynthesis; myo-inositol from D-glucose 6-phosphate: step 1/2. In terms of biological role, key enzyme in myo-inositol biosynthesis pathway that catalyzes the conversion of glucose 6-phosphate to 1-myo-inositol 1-phosphate in a NAD-dependent manner. This is Inositol-3-phosphate synthase from Nicotiana tabacum (Common tobacco).